The primary structure comprises 465 residues: Monocarboxylate transporter 4 (465 aa).

The Cytoplasmic portion of the chain corresponds to 2 to 17 (GGAVVDEGPTGVKAPD). A helical membrane pass occupies residues 18-38 (GGWGWAVLFGCFVITGFSYAF). Residues 39–61 (PKAVSVFFKELIQEFGIGYSDTA) are Extracellular-facing. The helical transmembrane segment at 62 to 82 (WISSILLAMLYGTGPLCSVCV) threads the bilayer. Residues 83-84 (NR) are Cytoplasmic-facing. A helical transmembrane segment spans residues 85–105 (FGCRPVMLVGGLFASLGMVAA). The Extracellular portion of the chain corresponds to 106–109 (SFCR). A helical membrane pass occupies residues 110-130 (SIIQVYLTTGVITGLGLALNF). At 131–149 (QPSLIMLNRYFSKRRPMAN) the chain is on the cytoplasmic side. The helical transmembrane segment at 150–170 (GLAAAGSPVFLCALSPLGQLL) threads the bilayer. Topologically, residues 171-179 (QDRYGWRGG) are extracellular. A helical transmembrane segment spans residues 180 to 200 (FLILGGLLLNCCVCAALMRPL). The Cytoplasmic portion of the chain corresponds to 201–227 (VVTAQPGSGPPRPSRRLLDLSVFRDRG). The chain crosses the membrane as a helical span at residues 228–248 (FVLYAVAASVMVLGLFVPPVF). The Extracellular segment spans residues 249–264 (VVSYAKDLGVPDTKAA). The helical transmembrane segment at 265 to 285 (FLLTILGFIDIFARPAAGFVA) threads the bilayer. Residues 286 to 294 (GLGKVRPYS) lie on the Cytoplasmic side of the membrane. The chain crosses the membrane as a helical span at residues 295–315 (VYLFSFSMFFNGLADLAGSTA). Over 316–317 (GD) the chain is Extracellular. Residues 318-338 (YGGLVVFCIFFGISYGMVGAL) traverse the membrane as a helical segment. Topologically, residues 339-351 (QFEVLMAIVGTHK) are cytoplasmic. A helical membrane pass occupies residues 352 to 372 (FSSAIGLVLLMEAVAVLVGPP). Residues 373-384 (SGGKLLDATHVY) are Extracellular-facing. Residues 385–405 (MYVFILAGAEVLTSSLILLLG) form a helical membrane-spanning segment. Topologically, residues 406–465 (NFFCIRKKPKEPQPEVAAAEEEKLHKPPADSGVDLREVEHFLKAEPEKNGEVVHTPETSV) are cytoplasmic. The tract at residues 419-438 (PEVAAAEEEKLHKPPADSGV) is disordered. 2 basolateral sorting signal regions span residues 423–441 (AAEEEKLHKPPADSGVDLR) and 441–465 (REVEHFLKAEPEKNGEVVHTPETSV). The span at 425-438 (EEEKLHKPPADSGV) shows a compositional bias: basic and acidic residues. Position 436 is a phosphoserine (serine 436). Position 460 is a phosphothreonine (threonine 460). Serine 464 carries the phosphoserine modification.

The protein belongs to the major facilitator superfamily. Monocarboxylate porter (TC 2.A.1.13) family. Interacts with BSG; interaction mediates SLC16A3 targeting to the plasma membrane. In terms of tissue distribution, highly expressed in skeletal muscle.

It localises to the cell membrane. Its subcellular location is the basolateral cell membrane. It carries out the reaction (S)-lactate(in) + H(+)(in) = (S)-lactate(out) + H(+)(out). The catalysed reaction is pyruvate(out) + H(+)(out) = pyruvate(in) + H(+)(in). Its function is as follows. Proton-dependent transporter of monocarboxylates such as L-lactate and pyruvate. Plays a predominant role in L-lactate efflux from highly glycolytic cells. The polypeptide is Monocarboxylate transporter 4 (SLC16A3) (Homo sapiens (Human)).